The sequence spans 610 residues: Glutamine--fructose-6-phosphate aminotransferase [isomerizing] (610 aa).

Cys-2 acts as the Nucleophile; for GATase activity in catalysis. The Glutamine amidotransferase type-2 domain maps to 2-219 (CGIVGAVAQR…EGDVAEITRR (218 aa)). SIS domains are found at residues 287-427 (ADEL…LRGM) and 459-600 (LAEG…VDQP). Lys-605 serves as the catalytic For Fru-6P isomerization activity.

Homodimer.

The protein resides in the cytoplasm. The enzyme catalyses D-fructose 6-phosphate + L-glutamine = D-glucosamine 6-phosphate + L-glutamate. Its function is as follows. Catalyzes the first step in hexosamine metabolism, converting fructose-6P into glucosamine-6P using glutamine as a nitrogen source. The protein is Glutamine--fructose-6-phosphate aminotransferase [isomerizing] of Pectobacterium atrosepticum (strain SCRI 1043 / ATCC BAA-672) (Erwinia carotovora subsp. atroseptica).